The following is a 350-amino-acid chain: Sulfate-binding protein (350 aa).

The first 40 residues, 1-40, serve as a signal peptide directing secretion; it reads MKTAWTRRSFLQSAALATATVITIAACGGNNQSSSGGSGQ.

The protein belongs to the prokaryotic sulfate-binding protein family.

The protein localises to the periplasm. This protein specifically binds sulfate and is involved in its transmembrane transport. The polypeptide is Sulfate-binding protein (sbpA) (Synechococcus elongatus (strain ATCC 33912 / PCC 7942 / FACHB-805) (Anacystis nidulans R2)).